A 456-amino-acid polypeptide reads, in one-letter code: Phospholipase A1 member A (456 aa).

An N-terminal signal peptide occupies residues 1–25 (MRPGLWETCFWLWGPLLWLSIGSSG). Serine 166 acts as the Nucleophile in catalysis. The Charge relay system role is filled by aspartate 190. Cysteine 245 and cysteine 258 are disulfide-bonded. Histidine 260 functions as the Charge relay system in the catalytic mechanism. 2 disulfide bridges follow: cysteine 282–cysteine 293 and cysteine 296–cysteine 304. Residue asparagine 365 is glycosylated (N-linked (GlcNAc...) asparagine).

It belongs to the AB hydrolase superfamily. Lipase family.

Its subcellular location is the secreted. It carries out the reaction a 1,2-diacyl-sn-glycero-3-phospho-L-serine + H2O = a 2-acyl-sn-glycero-3-phospho-L-serine + a fatty acid + H(+). It catalyses the reaction 1,2-di-(9Z)-octadecenoyl-sn-glycero-3-phospho-L-serine + H2O = 2-(9Z-octadecenoyl)-sn-glycero-3-phospho-L-serine + (9Z)-octadecenoate + H(+). The enzyme catalyses 1-hexadecanoyl-2-(5Z,8Z,11Z,14Z-eicosatetraenoyl)-sn-glycero-3-phospho-L-serine + H2O = 2-(5Z,8Z,11Z,14Z)-eicosatetraenoyl-sn-glycero-3-phospho-L-serine + hexadecanoate + H(+). The catalysed reaction is a 1-acyl-sn-glycero-3-phospho-L-serine + H2O = sn-glycero-3-phospho-L-serine + a fatty acid + H(+). It carries out the reaction 1-(9Z-octadecenoyl)-sn-glycero-3-phospho-L-serine + H2O = sn-glycero-3-phospho-L-serine + (9Z)-octadecenoate + H(+). Functionally, hydrolyzes the ester bond of the acyl group attached at the sn-1 position of phosphatidylserines (phospholipase A1 activity) and 1-acyl-2-lysophosphatidylserines (lysophospholipase activity) in the pathway of phosphatidylserines acyl chain remodeling. Cleaves phosphatidylserines exposed on the outer leaflet of the plasma membrane of apoptotic cells producing 2-acyl-1-lysophosphatidylserines, which in turn enhance mast cell activation and histamine production. Has no activity toward other glycerophospholipids including phosphatidylcholines, phosphatidylethanolamines, phosphatidic acids or phosphatidylinositols, or glycerolipids such as triolein. This is Phospholipase A1 member A from Mus musculus (Mouse).